The following is a 721-amino-acid chain: Ribosomal RNA large subunit methyltransferase K/L (721 aa).

One can recognise a THUMP domain in the interval 56 to 167 (GMYKACLWSR…REVVTVSIDL (112 aa)).

The protein belongs to the methyltransferase superfamily. RlmKL family.

The protein resides in the cytoplasm. It catalyses the reaction guanosine(2445) in 23S rRNA + S-adenosyl-L-methionine = N(2)-methylguanosine(2445) in 23S rRNA + S-adenosyl-L-homocysteine + H(+). The catalysed reaction is guanosine(2069) in 23S rRNA + S-adenosyl-L-methionine = N(2)-methylguanosine(2069) in 23S rRNA + S-adenosyl-L-homocysteine + H(+). In terms of biological role, specifically methylates the guanine in position 2445 (m2G2445) and the guanine in position 2069 (m7G2069) of 23S rRNA. This is Ribosomal RNA large subunit methyltransferase K/L from Marinomonas sp. (strain MWYL1).